A 277-amino-acid polypeptide reads, in one-letter code: Inositol monophosphatase 1 (277 aa).

Positions 70, 90, 92, and 93 each coordinate Mg(2+). Glutamate 70 is a substrate binding site. 92 to 95 (IDGT) provides a ligand contact to substrate. Residue threonine 168 is modified to Phosphothreonine. Residues 194 to 196 (GTA), glutamate 213, and aspartate 220 contribute to the substrate site. Aspartate 220 contacts Mg(2+).

Belongs to the inositol monophosphatase superfamily. In terms of assembly, homodimer. Mg(2+) serves as cofactor.

It localises to the cytoplasm. The enzyme catalyses a myo-inositol phosphate + H2O = myo-inositol + phosphate. It carries out the reaction 1D-myo-inositol 1-phosphate + H2O = myo-inositol + phosphate. The catalysed reaction is 1D-myo-inositol 2-phosphate + H2O = myo-inositol + phosphate. It catalyses the reaction 1D-myo-inositol 3-phosphate + H2O = myo-inositol + phosphate. The enzyme catalyses 1D-myo-inositol 4-phosphate + H2O = myo-inositol + phosphate. It carries out the reaction 1D-myo-inositol 5-phosphate + H2O = myo-inositol + phosphate. The catalysed reaction is 1D-myo-inositol 6-phosphate + H2O = myo-inositol + phosphate. It catalyses the reaction scyllo-inositol 1-phosphate + H2O = scyllo-inositol + phosphate. The enzyme catalyses alpha-D-galactose 1-phosphate + H2O = D-galactose + phosphate. It carries out the reaction alpha-D-glucose 1-phosphate + H2O = D-glucose + phosphate. The catalysed reaction is D-glucose 6-phosphate + H2O = D-glucose + phosphate. It catalyses the reaction beta-D-fructose 1-phosphate + H2O = D-fructose + phosphate. The enzyme catalyses glycerol 2-phosphate + H2O = glycerol + phosphate. It carries out the reaction adenosine 2'-phosphate + H2O = adenosine + phosphate. Its pathway is polyol metabolism; myo-inositol biosynthesis; myo-inositol from D-glucose 6-phosphate: step 2/2. With respect to regulation, inhibited by Li(+), Ca(2+) and Mn(2+), but also by Mg(2+) at concentrations above 3 mM. Functionally, phosphatase involved in the dephosphorylation of myo-inositol monophosphate to generate myo-inositol. Is also able to dephosphorylate scyllo-inositol-phosphate, myo-inositol 1,4-diphosphate, scyllo-inositol-1,3-diphosphate and scyllo-inositol-1,4-diphosphate. Also dephosphorylates in vitro other sugar-phosphates including D-galactose-1-phosphate, glucose-1-phosphate, glucose-6-phosphate, fructose-1-phosphate, beta-glycerophosphate and 2'-AMP. Responsible for the provision of inositol required for synthesis of phosphatidylinositol and polyphosphoinositides, and involved in maintaining normal brain function. Has been implicated as the pharmacological target for lithium Li(+) action in brain. This chain is Inositol monophosphatase 1 (IMPA1), found in Sus scrofa (Pig).